We begin with the raw amino-acid sequence, 247 residues long: Carboxy-S-adenosyl-L-methionine synthase (247 aa).

Residues Tyr-39, Gly-64–Ser-66, Asp-89–Asn-90, Asp-117–Ile-118, Asn-132, and Arg-199 contribute to the S-adenosyl-L-methionine site.

It belongs to the class I-like SAM-binding methyltransferase superfamily. Cx-SAM synthase family. In terms of assembly, homodimer.

It catalyses the reaction prephenate + S-adenosyl-L-methionine = carboxy-S-adenosyl-L-methionine + 3-phenylpyruvate + H2O. Its function is as follows. Catalyzes the conversion of S-adenosyl-L-methionine (SAM) to carboxy-S-adenosyl-L-methionine (Cx-SAM). The protein is Carboxy-S-adenosyl-L-methionine synthase of Escherichia coli O127:H6 (strain E2348/69 / EPEC).